The sequence spans 359 residues: 4-galactosyl-N-acetylglucosaminide 3-alpha-L-fucosyltransferase FUT6 (359 aa).

The Cytoplasmic portion of the chain corresponds to 1 to 14 (MDPLGPAKPQWSWR). A helical; Signal-anchor for type II membrane protein transmembrane segment spans residues 15-34 (CCLTTLLFQLLVAVCFFSYL). At 35–359 (RVSRDDPTVY…QTRSIAAWFT (325 aa)) the chain is on the lumenal side. Residues N46, N91, N153, and N184 are each glycosylated (N-linked (GlcNAc...) asparagine). Residues 73–112 (KPIALPRCSEMVPGTADCNITADRKVYPQADAVIVHHREV) are determines site-specific fucosylation.

This sequence belongs to the glycosyltransferase 10 family. In terms of assembly, homodimer and monomer. Monomer (secreted form). Post-translationally, N-glycosylated. Proteolytic cleavage releases a secreted glycoform of 43 kDa.

The protein resides in the golgi apparatus. Its subcellular location is the golgi stack membrane. The protein localises to the secreted. It catalyses the reaction a beta-D-galactosyl-(1-&gt;4)-N-acetyl-beta-D-glucosaminyl derivative + GDP-beta-L-fucose = a beta-D-galactosyl-(1-&gt;4)-[alpha-L-fucosyl-(1-&gt;3)]-N-acetyl-beta-D-glucosaminyl derivative + GDP + H(+). The catalysed reaction is an N-acetyl-alpha-neuraminyl-(2-&gt;3)-beta-D-galactosyl-(1-&gt;4)-N-acetyl-beta-D-glucosaminyl derivative + GDP-beta-L-fucose = an alpha-Neu5Ac-(2-&gt;3)-beta-D-Gal-(1-&gt;4)-[alpha-L-Fuc-(1-&gt;3)]-beta-D-GlcNAc derivative + GDP + H(+). It carries out the reaction an alpha-Neu5Ac-(2-&gt;3)-beta-D-Gal-(1-&gt;4)-beta-D-GlcNAc-(1-&gt;3)-beta-D-Gal-(1-&gt;4)-[alpha-L-Fuc-(1-&gt;3)]-beta-D-GlcNAc derivative + GDP-beta-L-fucose = an alpha-Neu5Ac-(2-&gt;3)-beta-D-Gal-(1-&gt;4)-[alpha-L-Fuc-(1-&gt;3)]-beta-D-GlcNAc-(1-&gt;3)-beta-D-Gal-(1-&gt;4)-[alpha-L-Fuc-(1-&gt;3)]-beta-D-GlcNAc derivative + GDP + H(+). The enzyme catalyses a neolactoside nLc6Cer + GDP-beta-L-fucose = beta-D-Gal-(1-&gt;4)-[alpha-L-Fuc-(1-&gt;3)]-beta-D-GlcNAc-(1-&gt;3)-beta-D-Gal-(1-&gt;4)-beta-D-GlcNAc-(1-&gt;3)-beta-D-Gal-(1-&gt;4)-beta-D-Glc-(1&lt;-&gt;1')-Cer + GDP + H(+). It catalyses the reaction a neolactoside nLc6Cer + GDP-beta-L-fucose = beta-D-galactosyl-(1-&gt;4)-N-acetyl-beta-D-glucosaminyl-(1-&gt;3)-beta-D-galactosyl-(1-&gt;4)-[alpha-L-fucosyl-(1-&gt;3)]-N-acetyl-beta-D-glucosaminyl-(1-&gt;3)-beta-D-galactosyl-(1-&gt;4)-beta-D-glucosyl-(1&lt;-&gt;1')-ceramide + GDP + H(+). The catalysed reaction is a neolactoside VI(3)-alpha-NeuNAc-nLc6Cer + GDP-beta-L-fucose = a neolactoside VI(3)-alpha-NeuAc,V(3)-alphaFuc-nLc6Cer + GDP + H(+). It carries out the reaction beta-D-galactosyl-(1-&gt;4)-N-acetyl-D-glucosamine + GDP-beta-L-fucose = beta-D-galactosyl-(1-&gt;4)-[alpha-L-fucosyl-(1-&gt;3)]-N-acetyl-D-glucosamine + GDP + H(+). The enzyme catalyses N-acetyl-alpha-neuraminosyl-(2-&gt;3)-beta-D-galactosyl-(1-&gt;4)-N-acetyl-beta-D-glucosamine + GDP-beta-L-fucose = N-acetyl-alpha-neuraminosyl-(2-&gt;3)-beta-D-galactosyl-(1-&gt;4)-[alpha-L-fucosyl-(1-&gt;3)]-N-acetyl-beta-D-glucosamine + GDP + H(+). It catalyses the reaction lactose + GDP-beta-L-fucose = beta-D-galactosyl-(1-&gt;4)-[alpha-L-fucosyl-(1-&gt;3)]-D-glucose + GDP + H(+). The catalysed reaction is alpha-L-Fuc-(1-&gt;2)-beta-D-Gal-(1-&gt;4)-D-Glc + GDP-beta-L-fucose = alpha-L-Fuc-(1-&gt;2)-beta-D-Gal-(1-&gt;4)-[alpha-L-Fuc-(1-&gt;3)]-D-Glc + GDP + H(+). It carries out the reaction a beta-D-galactosyl-(1-&gt;4)-N-acetyl-beta-D-6-sulfooxy-glucosaminyl derivative + GDP-beta-L-fucose = a beta-D-galactosyl-(1-&gt;4)-[alpha-L-fucosyl-(1-&gt;3)]-N-acetyl-beta-D-6-sulfooxy-glucosaminyl derivative + GDP + H(+). It functions in the pathway protein modification; protein glycosylation. In terms of biological role, catalyzes the transfer of L-fucose, from a guanosine diphosphate-beta-L-fucose, to the N-acetyl glucosamine (GlcNAc) of a distal alpha2,3 sialylated lactosamine unit of a glycoprotein- or glycolipid-linked sialopolylactosamines chain or of a distal or internal lactosamine unit of a neutral glycoprotein- or glycolipid-linked polylactosamines chain through an alpha-1,3 glycosidic linkage and participates in surface expression of the sialyl Lewis X (sLe(x)), Lewis X (Le(x)) and non sialylated VIM2 determinants. Moreover transfers fucose to H-type 2 (Fucalpha1-2Galbeta1-4GlcNAc) chain acceptor substrates and participates in difucosylated sialyl Lewis x determinants. Also fucosylates a polylactosamine substrate having a 6 sulfate modification at the GlcNAc moiety and gives rise to sialyl and non-sialyl 6-sulfo lewis X. Does not have activity towards type 1 ((Galbeta1-3GlcNAc)) and H-type 1 chain (Fucalpha1-2Galbeta1-3GlcNAc) acceptors substrates. The sequence is that of 4-galactosyl-N-acetylglucosaminide 3-alpha-L-fucosyltransferase FUT6 from Pan troglodytes (Chimpanzee).